We begin with the raw amino-acid sequence, 152 residues long: Ubiquitin-conjugating enzyme E2 B (152 aa).

Residues 4 to 150 (PARRRLMRDF…VSAIVEQSWN (147 aa)) form the UBC core domain. Cys-88 acts as the Glycyl thioester intermediate in catalysis.

The protein belongs to the ubiquitin-conjugating enzyme family. As to quaternary structure, interacts with RAD18, UBR2 and WAC.

The protein localises to the cell membrane. It localises to the nucleus. It catalyses the reaction S-ubiquitinyl-[E1 ubiquitin-activating enzyme]-L-cysteine + [E2 ubiquitin-conjugating enzyme]-L-cysteine = [E1 ubiquitin-activating enzyme]-L-cysteine + S-ubiquitinyl-[E2 ubiquitin-conjugating enzyme]-L-cysteine.. It participates in protein modification; protein ubiquitination. Functionally, E2 ubiquitin-conjugating enzyme that accepts ubiquitin from the ubiquitin-activating enzyme E1 and transfers it to a E3 ubiquitin-protein ligase. In vitro catalyzes 'Lys-11'-, as well as 'Lys-48'- and 'Lys-63'-linked polyubiquitination. Together with the E3 enzyme BRE1 (RNF20 and/or RNF40), plays a role in transcription regulation by catalyzing the monoubiquitination of histone H2B at 'Lys-120' to form H2BK120ub1. H2BK120ub1 gives a specific tag for epigenetic transcriptional activation, elongation by RNA polymerase II, telomeric silencing, and is also a prerequisite for H3K4me and H3K79me formation. May play a role in DNA repair. Associates to the E3 ligase RAD18 to form the UBE2B-RAD18 ubiquitin ligase complex involved in mono-ubiquitination of DNA-associated PCNA on 'Lys-164'. In association with the E3 enzyme UBR4, is involved in N-end rule-dependent protein degradation. May be involved in neurite outgrowth. This chain is Ubiquitin-conjugating enzyme E2 B (UBE2B), found in Bos taurus (Bovine).